Reading from the N-terminus, the 76-residue chain is MLQLVNDNGLVVNVILWLFVLFFLLIISITFVQLVNLCFTCHRLCNSAVYTPIGRLYRVYKSYMRIDPLPSTVIDV.

At 1 to 14 the chain is on the virion surface side; the sequence is MLQLVNDNGLVVNV. Residues 15 to 35 form a helical membrane-spanning segment; it reads ILWLFVLFFLLIISITFVQLV. Topologically, residues 36–76 are intravirion; that stretch reads NLCFTCHRLCNSAVYTPIGRLYRVYKSYMRIDPLPSTVIDV.

This sequence belongs to the alphacoronaviruses E protein family. In terms of assembly, homopentamer. Interacts with membrane protein M in the budding compartment of the host cell, which is located between endoplasmic reticulum and the Golgi complex. Interacts with Nucleoprotein. Interacts with host IRF3; this interaction inhibits type I IFN production.

It is found in the host Golgi apparatus membrane. The protein localises to the host endoplasmic reticulum. Functionally, plays a central role in virus morphogenesis and assembly. Acts as a viroporin and self-assembles in host membranes forming pentameric protein-lipid pores that allow ion transport. Also plays a role in the induction of apoptosis. Counteracts the production of type I interferon by interacting with host IRF3 component and preventing its translocation to the host nucleus. This is Envelope small membrane protein from Sus scrofa (Pig).